A 469-amino-acid chain; its full sequence is 3-isopropylmalate dehydratase large subunit (469 aa).

Positions 350, 410, and 413 each coordinate [4Fe-4S] cluster.

It belongs to the aconitase/IPM isomerase family. LeuC type 1 subfamily. As to quaternary structure, heterodimer of LeuC and LeuD. The cofactor is [4Fe-4S] cluster.

It carries out the reaction (2R,3S)-3-isopropylmalate = (2S)-2-isopropylmalate. Its pathway is amino-acid biosynthesis; L-leucine biosynthesis; L-leucine from 3-methyl-2-oxobutanoate: step 2/4. Catalyzes the isomerization between 2-isopropylmalate and 3-isopropylmalate, via the formation of 2-isopropylmaleate. The sequence is that of 3-isopropylmalate dehydratase large subunit from Rhizobium meliloti (strain 1021) (Ensifer meliloti).